The chain runs to 238 residues: Large ribosomal subunit protein uL1 (238 aa).

It belongs to the universal ribosomal protein uL1 family. Part of the 50S ribosomal subunit.

In terms of biological role, binds directly to 23S rRNA. The L1 stalk is quite mobile in the ribosome, and is involved in E site tRNA release. Its function is as follows. Protein L1 is also a translational repressor protein, it controls the translation of the L11 operon by binding to its mRNA. This Frankia casuarinae (strain DSM 45818 / CECT 9043 / HFP020203 / CcI3) protein is Large ribosomal subunit protein uL1.